A 308-amino-acid chain; its full sequence is Quinolinate synthase (308 aa).

Iminosuccinate-binding residues include H21 and S38. C83 is a [4Fe-4S] cluster binding site. Iminosuccinate is bound by residues Y109 to N111 and S126. [4Fe-4S] cluster is bound at residue C170. Iminosuccinate-binding positions include H196 to E198 and T213. Residue C263 participates in [4Fe-4S] cluster binding.

This sequence belongs to the quinolinate synthase family. Type 2 subfamily. [4Fe-4S] cluster is required as a cofactor.

It localises to the cytoplasm. The catalysed reaction is iminosuccinate + dihydroxyacetone phosphate = quinolinate + phosphate + 2 H2O + H(+). The protein operates within cofactor biosynthesis; NAD(+) biosynthesis; quinolinate from iminoaspartate: step 1/1. Functionally, catalyzes the condensation of iminoaspartate with dihydroxyacetone phosphate to form quinolinate. The sequence is that of Quinolinate synthase from Sulfurisphaera tokodaii (strain DSM 16993 / JCM 10545 / NBRC 100140 / 7) (Sulfolobus tokodaii).